The sequence spans 234 residues: 2,3-bisphosphoglycerate-dependent phosphoglycerate mutase 1 (234 aa).

Substrate contacts are provided by residues 14–21 (RHGQSIWN), 27–28 (TG), Arg66, and 93–96 (ERHY). The Tele-phosphohistidine intermediate role is filled by His15. The active-site Proton donor/acceptor is the Glu93.

The protein belongs to the phosphoglycerate mutase family. BPG-dependent PGAM subfamily. As to quaternary structure, homodimer.

It catalyses the reaction (2R)-2-phosphoglycerate = (2R)-3-phosphoglycerate. It functions in the pathway carbohydrate degradation; glycolysis; pyruvate from D-glyceraldehyde 3-phosphate: step 3/5. In terms of biological role, catalyzes the interconversion of 2-phosphoglycerate and 3-phosphoglycerate. The polypeptide is 2,3-bisphosphoglycerate-dependent phosphoglycerate mutase 1 (Nitrosomonas europaea (strain ATCC 19718 / CIP 103999 / KCTC 2705 / NBRC 14298)).